Reading from the N-terminus, the 351-residue chain is Tetraacyldisaccharide 4'-kinase (351 aa).

47-54 contributes to the ATP binding site; that stretch reads KAGGTGKT.

Belongs to the LpxK family.

It catalyses the reaction a lipid A disaccharide + ATP = a lipid IVA + ADP + H(+). Its pathway is glycolipid biosynthesis; lipid IV(A) biosynthesis; lipid IV(A) from (3R)-3-hydroxytetradecanoyl-[acyl-carrier-protein] and UDP-N-acetyl-alpha-D-glucosamine: step 6/6. In terms of biological role, transfers the gamma-phosphate of ATP to the 4'-position of a tetraacyldisaccharide 1-phosphate intermediate (termed DS-1-P) to form tetraacyldisaccharide 1,4'-bis-phosphate (lipid IVA). This Cytophaga hutchinsonii (strain ATCC 33406 / DSM 1761 / CIP 103989 / NBRC 15051 / NCIMB 9469 / D465) protein is Tetraacyldisaccharide 4'-kinase.